A 244-amino-acid chain; its full sequence is Uridylate kinase (244 aa).

Residue 18 to 21 (KVSG) coordinates ATP. A UMP-binding site is contributed by G60. G61 and R65 together coordinate ATP. UMP contacts are provided by residues D80 and 141-148 (TGNPFCTT). T168, Q169, Y174, and D177 together coordinate ATP.

This sequence belongs to the UMP kinase family. In terms of assembly, homohexamer.

Its subcellular location is the cytoplasm. It carries out the reaction UMP + ATP = UDP + ADP. Its pathway is pyrimidine metabolism; CTP biosynthesis via de novo pathway; UDP from UMP (UMPK route): step 1/1. Its activity is regulated as follows. Inhibited by UTP. Catalyzes the reversible phosphorylation of UMP to UDP. This is Uridylate kinase from Rickettsia typhi (strain ATCC VR-144 / Wilmington).